Here is a 461-residue protein sequence, read N- to C-terminus: Transforming growth factor beta-1-induced transcript 1 protein (461 aa).

Methionine 1 carries the post-translational modification N-acetylmethionine. The tract at residues 1–87 (MEDLDALLSD…PFSSSSGVLG (87 aa)) is disordered. Positions 1 to 200 (MEDLDALLSD…GSPSPPEPTG (200 aa)) are transcription activation. An interaction with PTK2B/PYK2 region spans residues 1–240 (MEDLDALLSD…CNKPIAGQVV (240 aa)). Positions 3–15 (DLDALLSDLETTT) match the LD motif 1 motif. At threonine 33 the chain carries Phosphothreonine. Phosphotyrosine is present on tyrosine 38. Polar residues predominate over residues 40 to 52 (HQPQTGSGESSGA). Tyrosine 60 carries the phosphotyrosine; by FAK2 and FYN modification. A Phosphoserine modification is found at serine 68. Positions 83 to 136 (SGVLGTGLCELDRLLQELNATQFNITDEIMSQFPSSKVASGEQKEDQSEDKKRP) are interaction with PTK2/FAK1. The LD motif 2 signature appears at 92-104 (ELDRLLQELNATQ). Residues 116-152 (PSSKVASGEQKEDQSEDKKRPSLPSSPSPGLPKASAT) are disordered. Basic and acidic residues predominate over residues 124–135 (EQKEDQSEDKKR). Phosphoserine is present on residues serine 137, serine 140, serine 141, serine 143, serine 164, and serine 186. An LD motif 3 motif is present at residues 157–168 (ELDRLMASLSDF). The disordered stretch occupies residues 172-205 (NHLPASGPTQPPVVSSTNEGSPSPPEPTGKGSLD). Positions 183–192 (PVVSSTNEGS) are enriched in polar residues. Phosphothreonine is present on threonine 188. Residues serine 192 and serine 194 each carry the phosphoserine modification. The LD motif 4 motif lies at 203 to 215 (SLDTMLGLLQSDL). LIM zinc-binding domains lie at 226–285 (GLCG…RFSP), 286–343 (RCGF…QLFA), 344–403 (PRCQ…RRGS), and 404–461 (LCAT…KLFG). A Phosphoserine modification is found at serine 403. Threonine 407 is modified (phosphothreonine).

This sequence belongs to the paxillin family. Homooligomer. Interacts with PPARG. Interacts with TRAF4. Interacts with CRIP2. Interacts with HSPB1. Interacts with ILK. Interacts with LIMS1 and LIMS2. Interacts with NCK2. Interacts with NUDT16L1. Interacts with PAK. Interacts with PTPN12. Interacts with TCF3. Interacts with TCF7L2. Interacts with VCL. Interacts (via LD motif 3) with GIT1. Also interacts with GIT2. Forms a complex with ARHGEF7. Interacts with AR/androgen receptor in a ligand-dependent manner. Interacts with CSK. Interacts with PTK2/FAK1 and PTK2B/PYK2. Interacts with SLC6A3 and SLC6A4. Interacts with NR3C1. Interacts with SMAD3. Interacts with MAPK15. Interacts with SRC. Interacts with LYN. Interacts with talin. Interacts (via LIM zinc-binding domain 2) with CBLC (via RING-type zinc finger); the interaction is direct and enhances CBLC E3 ubiquitin-protein ligase activity. Interacts with PARVA. Interacts with PXN. Post-translationally, phosphorylated by gonadotropin-releasing hormone-activated SRC. As to expression, expressed in platelets, smooth muscle and prostate stromal cells (at protein level).

The protein localises to the cell junction. It localises to the focal adhesion. Its subcellular location is the nucleus matrix. The protein resides in the cytoplasm. It is found in the cytoskeleton. Functionally, functions as a molecular adapter coordinating multiple protein-protein interactions at the focal adhesion complex and in the nucleus. Links various intracellular signaling modules to plasma membrane receptors and regulates the Wnt and TGFB signaling pathways. May also regulate SLC6A3 and SLC6A4 targeting to the plasma membrane hence regulating their activity. In the nucleus, functions as a nuclear receptor coactivator regulating glucocorticoid, androgen, mineralocorticoid and progesterone receptor transcriptional activity. May play a role in the processes of cell growth, proliferation, migration, differentiation and senescence. May have a zinc-dependent DNA-binding activity. This Homo sapiens (Human) protein is Transforming growth factor beta-1-induced transcript 1 protein (TGFB1I1).